Here is a 164-residue protein sequence, read N- to C-terminus: Sperm axonemal maintenance protein CFAP97D1 (164 aa).

A coiled-coil region spans residues 61–88 (LSKIQGEQKRIDKIEYENRQLCQKIANA).

The protein belongs to the CFAP97 family. As to expression, expressed exclusively in testis.

Its function is as follows. Required for male fertility through its role in axonemal doublet stabilization which is essential for sperm motility and fertilization. The protein is Sperm axonemal maintenance protein CFAP97D1 (Cfap97d1) of Mus musculus (Mouse).